The chain runs to 141 residues: Large ribosomal subunit protein uL11 (141 aa).

This sequence belongs to the universal ribosomal protein uL11 family. In terms of assembly, part of the ribosomal stalk of the 50S ribosomal subunit. Interacts with L10 and the large rRNA to form the base of the stalk. L10 forms an elongated spine to which L12 dimers bind in a sequential fashion forming a multimeric L10(L12)X complex. In terms of processing, one or more lysine residues are methylated.

In terms of biological role, forms part of the ribosomal stalk which helps the ribosome interact with GTP-bound translation factors. The chain is Large ribosomal subunit protein uL11 from Chlamydia trachomatis serovar A (strain ATCC VR-571B / DSM 19440 / HAR-13).